The following is a 209-amino-acid chain: Interleukin-6 (209 aa).

Residues 1–26 (RFTSAFSPVAFSLGLLLVMATAFPTP) form the signal peptide. Residues 28-47 (PVGGESQADATSNRPPLTSP) are disordered. The cysteines at positions 69 and 75 are disulfide-linked. A Phosphoserine modification is found at Ser-78. The cysteines at positions 98 and 108 are disulfide-linked.

Belongs to the IL-6 superfamily. In terms of assembly, component of a hexamer of two molecules each of IL6, IL6R and IL6ST; first binds to IL6R to associate with the signaling subunit IL6ST. Interacts with IL6R (via the N-terminal ectodomain); this interaction may be affected by IL6R-binding with SORL1, hence decreasing IL6 cis signaling. Interacts with SORL1 (via the N-terminal ectodomain); this interaction leads to IL6 internalization and lysosomal degradation. May form a trimeric complex with the soluble SORL1 ectodomain and soluble IL6R receptor; this interaction might stabilize circulating IL6, hence promoting IL6 trans signaling.

It is found in the secreted. Functionally, cytokine with a wide variety of biological functions in immunity, tissue regeneration, and metabolism. Binds to IL6R, then the complex associates to the signaling subunit IL6ST/gp130 to trigger the intracellular IL6-signaling pathway. The interaction with the membrane-bound IL6R and IL6ST stimulates 'classic signaling', whereas the binding of IL6 and soluble IL6R to IL6ST stimulates 'trans-signaling'. Alternatively, 'cluster signaling' occurs when membrane-bound IL6:IL6R complexes on transmitter cells activate IL6ST receptors on neighboring receiver cells. Its function is as follows. IL6 is a potent inducer of the acute phase response. Rapid production of IL6 contributes to host defense during infection and tissue injury, but excessive IL6 synthesis is involved in disease pathology. In the innate immune response, is synthesized by myeloid cells, such as macrophages and dendritic cells, upon recognition of pathogens through toll-like receptors (TLRs) at the site of infection or tissue injury. In the adaptive immune response, is required for the differentiation of B cells into immunoglobulin-secreting cells. Plays a major role in the differentiation of CD4(+) T cell subsets. Essential factor for the development of T follicular helper (Tfh) cells that are required for the induction of germinal-center formation. Required to drive naive CD4(+) T cells to the Th17 lineage. Also required for proliferation of myeloma cells and the survival of plasmablast cells. Acts as an essential factor in bone homeostasis and on vessels directly or indirectly by induction of VEGF, resulting in increased angiogenesis activity and vascular permeability. Induces, through 'trans-signaling' and synergistically with IL1B and TNF, the production of VEGF. Involved in metabolic controls, is discharged into the bloodstream after muscle contraction increasing lipolysis and improving insulin resistance. 'Trans-signaling' in central nervous system also regulates energy and glucose homeostasis. Mediates, through GLP-1, crosstalk between insulin-sensitive tissues, intestinal L cells and pancreatic islets to adapt to changes in insulin demand. Also acts as a myokine. Plays a protective role during liver injury, being required for maintenance of tissue regeneration. Also has a pivotal role in iron metabolism by regulating HAMP/hepcidin expression upon inflammation or bacterial infection. Through activation of IL6ST-YAP-NOTCH pathway, induces inflammation-induced epithelial regeneration. This is Interleukin-6 (IL6) from Phoca vitulina (Harbor seal).